A 389-amino-acid chain; its full sequence is Glutamate 5-kinase (389 aa).

Lysine 16 contacts ATP. Substrate-binding residues include serine 56, aspartate 143, and asparagine 155. ATP is bound at residue 175-176 (SD). In terms of domain architecture, PUA spans 281–358 (AGELHVDEGA…AEIEAILGYA (78 aa)).

Belongs to the glutamate 5-kinase family.

It localises to the cytoplasm. The enzyme catalyses L-glutamate + ATP = L-glutamyl 5-phosphate + ADP. Its pathway is amino-acid biosynthesis; L-proline biosynthesis; L-glutamate 5-semialdehyde from L-glutamate: step 1/2. Functionally, catalyzes the transfer of a phosphate group to glutamate to form L-glutamate 5-phosphate. The sequence is that of Glutamate 5-kinase from Rhizobium rhizogenes (strain K84 / ATCC BAA-868) (Agrobacterium radiobacter).